The sequence spans 838 residues: Protein translocase subunit SecA (838 aa).

Residues Gln-86, 104–108 (GEGKT), and Asp-493 each bind ATP. Positions 793–838 (NTQAVSGGEDSGKKKTKKPVVKSNTVKRNDPCPCGSGKKYKNCHGQ) are disordered. Cys-824, Cys-826, Cys-835, and His-836 together coordinate Zn(2+).

It belongs to the SecA family. Monomer and homodimer. Part of the essential Sec protein translocation apparatus which comprises SecA, SecYEG and auxiliary proteins SecDF. Other proteins may also be involved. Zn(2+) serves as cofactor.

It localises to the cell membrane. Its subcellular location is the cytoplasm. The enzyme catalyses ATP + H2O + cellular proteinSide 1 = ADP + phosphate + cellular proteinSide 2.. Part of the Sec protein translocase complex. Interacts with the SecYEG preprotein conducting channel. Has a central role in coupling the hydrolysis of ATP to the transfer of proteins into and across the cell membrane, serving as an ATP-driven molecular motor driving the stepwise translocation of polypeptide chains across the membrane. This is Protein translocase subunit SecA from Oceanobacillus iheyensis (strain DSM 14371 / CIP 107618 / JCM 11309 / KCTC 3954 / HTE831).